Reading from the N-terminus, the 352-residue chain is UDP-3-O-acylglucosamine N-acyltransferase (352 aa).

Residue His244 is the Proton acceptor of the active site.

The protein belongs to the transferase hexapeptide repeat family. LpxD subfamily. In terms of assembly, homotrimer.

It carries out the reaction a UDP-3-O-[(3R)-3-hydroxyacyl]-alpha-D-glucosamine + a (3R)-hydroxyacyl-[ACP] = a UDP-2-N,3-O-bis[(3R)-3-hydroxyacyl]-alpha-D-glucosamine + holo-[ACP] + H(+). It functions in the pathway bacterial outer membrane biogenesis; LPS lipid A biosynthesis. In terms of biological role, catalyzes the N-acylation of UDP-3-O-acylglucosamine using 3-hydroxyacyl-ACP as the acyl donor. Is involved in the biosynthesis of lipid A, a phosphorylated glycolipid that anchors the lipopolysaccharide to the outer membrane of the cell. This is UDP-3-O-acylglucosamine N-acyltransferase from Anaeromyxobacter sp. (strain Fw109-5).